The following is a 77-amino-acid chain: MKNYSKNATYLITVLLFSFVAMLLIIPSKCEAVSNDMQPLEARTADLVQQPRYIIDVPPRCPPGSKFVHKRCRVIVP.

The N-terminal stretch at 1–32 is a signal peptide; it reads MKNYSKNATYLITVLLFSFVAMLLIIPSKCEA. The propeptide occupies 33-52; that stretch reads VSNDMQPLEARTADLVQQPR. C61 and C72 form a disulfide bridge.

Belongs to the secapin family. Expressed by the venom gland.

It localises to the secreted. Its function is as follows. Nontoxic peptide. This is Secapin from Apis cerana cerana (Oriental honeybee).